The chain runs to 201 residues: MSIQHFQTKLGITKYSIVTNSNDSVTLRLMTEHDLAMLYEWLNRSHIVEWWGGEEARPTLADVQEQYLPSVLAQESVTPYIAMLNGEPIGYAQSYVALGSGDGWWEEETDPGVRGIDQLLANASQLGKGLGTKLVRALVELLFNDPEVTKIQTDPSPSNLRAIRCYEKAGFERQGTVTTPDGPAVYMVQTRQAFERTRSVA.

The N-acetyltransferase domain occupies valine 25 to glutamine 192. Tryptophan 51 and aspartate 154 together coordinate substrate. An acetyl-CoA-binding site is contributed by asparagine 159.

Homodimer.

It carries out the reaction kanamycin B + acetyl-CoA = N(6')-acetylkanamycin B + CoA + H(+). Functionally, catalyzes the transfer of an acetyl group from acetyl-CoA to the 6'-amino group of aminoglycoside molecules conferring resistance to antibiotics containing the purpurosamine ring including amikacin. In Klebsiella pneumoniae, this protein is Aminoglycoside N(6')-acetyltransferase type 1 (aacA4).